The sequence spans 208 residues: Uracil phosphoribosyltransferase (208 aa).

Residues Arg78, Arg103, and 130-138 (DPMLATGGS) contribute to the 5-phospho-alpha-D-ribose 1-diphosphate site. Residues Ile193 and 198-200 (GDA) each bind uracil. Asp199 contributes to the 5-phospho-alpha-D-ribose 1-diphosphate binding site.

Belongs to the UPRTase family. The cofactor is Mg(2+).

The enzyme catalyses UMP + diphosphate = 5-phospho-alpha-D-ribose 1-diphosphate + uracil. It functions in the pathway pyrimidine metabolism; UMP biosynthesis via salvage pathway; UMP from uracil: step 1/1. Allosterically activated by GTP. In terms of biological role, catalyzes the conversion of uracil and 5-phospho-alpha-D-ribose 1-diphosphate (PRPP) to UMP and diphosphate. This chain is Uracil phosphoribosyltransferase, found in Neisseria gonorrhoeae (strain ATCC 700825 / FA 1090).